The chain runs to 206 residues: Ribosomal RNA small subunit methyltransferase G (206 aa).

S-adenosyl-L-methionine-binding positions include glycine 74, leucine 79, 125-126, and arginine 140; that span reads VE.

This sequence belongs to the methyltransferase superfamily. RNA methyltransferase RsmG family.

Its subcellular location is the cytoplasm. It carries out the reaction guanosine(527) in 16S rRNA + S-adenosyl-L-methionine = N(7)-methylguanosine(527) in 16S rRNA + S-adenosyl-L-homocysteine. Specifically methylates the N7 position of guanine in position 527 of 16S rRNA. The sequence is that of Ribosomal RNA small subunit methyltransferase G from Shewanella putrefaciens (strain CN-32 / ATCC BAA-453).